The following is a 356-amino-acid chain: Gluconolactonase (356 aa).

A signal peptide (tat-type signal) is located at residues 1–35; it reads MTTGRMSRRECLSAAVMVPIAAMTATATITGSAQA.

Homodimer. In terms of processing, predicted to be exported by the Tat system. The position of the signal peptide cleavage has been experimentally proven.

It is found in the periplasm. It catalyses the reaction D-glucono-1,5-lactone + H2O = D-gluconate + H(+). It functions in the pathway carbohydrate acid metabolism; D-gluconate biosynthesis; D-gluconate from D-glucono-1,5-lactone: step 1/1. Its function is as follows. Hydrolyzes the gluconolactone formed by glucose-fructose oxidoreductase, and that formed in aerobic conditions by the glucose dehydrogenase present. This is Gluconolactonase (gnl) from Zymomonas mobilis subsp. mobilis (strain ATCC 31821 / ZM4 / CP4).